A 215-amino-acid polypeptide reads, in one-letter code: Riboflavin synthase (215 aa).

Lumazine-binding repeat units lie at residues 1–96 (MFTG…FGGH) and 97–193 (FVSG…YRFL). Residues 4–6 (GII), 47–49 (CLT), 61–66 (DVMPET), 100–102 (GHV), K135, 144–146 (SLT), and 158–163 (SLIPHT) each bind 2,4-dihydroxypteridine.

As to quaternary structure, homotrimer. Can interact with 6,7-dimethyl-8-ribityllumazine synthase, forming a lumazine synthase/riboflavin synthase complex, also designated as 'heavy riboflavin synthase complex', which consists of a trimer of riboflavin synthase enclosed within an icosahedral structure composed of 60 subunits of 6,7-dimethyl-8-ribityllumazine synthase.

The enzyme catalyses 2 6,7-dimethyl-8-(1-D-ribityl)lumazine + H(+) = 5-amino-6-(D-ribitylamino)uracil + riboflavin. The protein operates within cofactor biosynthesis; riboflavin biosynthesis; riboflavin from 2-hydroxy-3-oxobutyl phosphate and 5-amino-6-(D-ribitylamino)uracil: step 2/2. Is activated by sulfite ions. In terms of biological role, catalyzes the dismutation of two molecules of 6,7-dimethyl-8-ribityllumazine, resulting in the formation of riboflavin and 5-amino-6-(D-ribitylamino)uracil. The sequence is that of Riboflavin synthase (ribE) from Bacillus subtilis (strain 168).